The following is a 502-amino-acid chain: Maturase K (502 aa).

Belongs to the intron maturase 2 family. MatK subfamily.

It localises to the plastid. The protein resides in the chloroplast. Usually encoded in the trnK tRNA gene intron. Probably assists in splicing its own and other chloroplast group II introns. This chain is Maturase K, found in Fremontodendron californicum (California flannelbush).